We begin with the raw amino-acid sequence, 1071 residues long: V-type proton ATPase catalytic subunit A (1071 aa).

An N-acetylalanine modification is found at A2. The residue at position 131 (T131) is a Phosphothreonine. 257-264 (GAFGCGKT) is an ATP binding site. The region spanning 494–642 (LLGLWIGDGL…LVSLARSLGL (149 aa)) is the DOD-type homing endonuclease domain. Phosphoserine occurs at positions 858 and 928.

This sequence belongs to the ATPase alpha/beta chains family. As to quaternary structure, V-ATPase is a heteromultimeric enzyme composed of a peripheral catalytic V1 complex (components A to H) attached to an integral membrane V0 proton pore complex (components: a, c, c', c'', d, e, f and VOA1). Interacts with RAV1 and RAV2 components of the RAVE complex, which are essential for the stability and assembly of V-ATPase. Post-translationally, this protein undergoes a protein self splicing that involves a post-translational excision of the VDE intervening region (intein) followed by peptide ligation.

It is found in the vacuole membrane. The catalysed reaction is ATP + H2O + 4 H(+)(in) = ADP + phosphate + 5 H(+)(out). Its function is as follows. Catalytic subunit of the V1 complex of vacuolar(H+)-ATPase (V-ATPase), a multisubunit enzyme composed of a peripheral complex (V1) that hydrolyzes ATP and a membrane integral complex (V0) that translocates protons. V-ATPase is responsible for acidifying and maintaining the pH of intracellular compartments. PI-SceI is an endonuclease that can cleave at a site present in a VMA1 allele that lacks the derived endonuclease segment of the open reading frame; cleavage at this site only occurs during meiosis and initiates 'homing', a genetic event that converts a VMA1 allele lacking VDE into one that contains it. In Saccharomyces cerevisiae (strain ATCC 204508 / S288c) (Baker's yeast), this protein is V-type proton ATPase catalytic subunit A.